The following is a 330-amino-acid chain: Probable deoxyhypusine synthase (330 aa).

The Nucleophile role is filled by Lys303.

It belongs to the deoxyhypusine synthase family. The cofactor is NAD(+).

It catalyses the reaction [eIF5A protein]-L-lysine + spermidine = [eIF5A protein]-deoxyhypusine + propane-1,3-diamine. It functions in the pathway protein modification; eIF5A hypusination. Functionally, catalyzes the NAD-dependent oxidative cleavage of spermidine and the subsequent transfer of the butylamine moiety of spermidine to the epsilon-amino group of a specific lysine residue of the eIF-5A precursor protein to form the intermediate deoxyhypusine residue. In Methanocaldococcus jannaschii (strain ATCC 43067 / DSM 2661 / JAL-1 / JCM 10045 / NBRC 100440) (Methanococcus jannaschii), this protein is Probable deoxyhypusine synthase (dys).